Reading from the N-terminus, the 270-residue chain is Elongation factor Tu (270 aa).

In terms of domain architecture, tr-type G spans 1-103; that stretch reads GILVVSAADG…AVDDYIPTPE (103 aa). Residue 35 to 38 coordinates GTP; sequence NKVD.

The protein belongs to the TRAFAC class translation factor GTPase superfamily. Classic translation factor GTPase family. EF-Tu/EF-1A subfamily. Monomer.

The protein resides in the cytoplasm. It carries out the reaction GTP + H2O = GDP + phosphate + H(+). Its function is as follows. GTP hydrolase that promotes the GTP-dependent binding of aminoacyl-tRNA to the A-site of ribosomes during protein biosynthesis. The chain is Elongation factor Tu (tuf) from Staphylococcus warneri.